Consider the following 861-residue polypeptide: Protein argonaute-3 (861 aa).

Methionine 1 bears the N-acetylmethionine mark. The PAZ domain occupies proline 230–alanine 349. Positions leucine 518–valine 820 constitute a Piwi domain. Residues tyrosine 530–lysine 567 are interaction with guide RNA. Residues aspartate 598, glutamate 638, and aspartate 670 each coordinate a divalent metal cation. The tract at residues glutamine 758 to tyrosine 806 is interaction with guide RNA. Histidine 809 lines the a divalent metal cation pocket. The segment at arginine 824 to alanine 847 is disordered. Phosphoserine is present on serine 826.

The protein belongs to the argonaute family. Ago subfamily. In terms of assembly, interacts with EIF4B, IMP8, PRMT5 and TNRC6B. Interacts with APOBEC3F, APOBEC3G and APOBEC3H. Interacts with EDC4. Ubiquitinated on surface-exposed lysines by a SCF-like E3 ubiquitin-protein ligase complex containing ZSWIM8 during target-directed microRNA degradation (TDMD), a process that mediates degradation of microRNAs (miRNAs). Ubiquitination by the SCF-like E3 ubiquitin-protein ligase complex containing ZSWIM8 leads to its subsequent degradation, thereby exposing miRNAs for degradation. ZSWIM8 recognizes and binds AGO3 when it is engaged with a TDMD target.

It localises to the cytoplasm. Its subcellular location is the P-body. The catalysed reaction is Endonucleolytic cleavage to 5'-phosphomonoester.. Its function is as follows. Required for RNA-mediated gene silencing (RNAi). Binds to short RNAs such as microRNAs (miRNAs) and represses the translation of mRNAs which are complementary to them. Proposed to be involved in stabilization of small RNA derivates (siRNA) derived from processed RNA polymerase III-transcribed Alu repeats containing a DR2 retinoic acid response element (RARE) in stem cells and in the subsequent siRNA-dependent degradation of a subset of RNA polymerase II-transcribed coding mRNAs by recruiting a mRNA decapping complex involving EDC4. Possesses RNA slicer activity but only on select RNAs bearing 5'- and 3'-flanking sequences to the region of guide-target complementarity. The chain is Protein argonaute-3 (AGO3) from Bos taurus (Bovine).